A 932-amino-acid chain; its full sequence is Protein translocase subunit SecA (932 aa).

Residues glutamine 90, 108 to 112 (GEGKT), and aspartate 498 contribute to the ATP site.

Belongs to the SecA family. In terms of assembly, monomer and homodimer. Part of the essential Sec protein translocation apparatus which comprises SecA, SecYEG and auxiliary proteins SecDF. Other proteins may also be involved.

The protein localises to the cell inner membrane. It is found in the cellular thylakoid membrane. Its subcellular location is the cytoplasm. The catalysed reaction is ATP + H2O + cellular proteinSide 1 = ADP + phosphate + cellular proteinSide 2.. Part of the Sec protein translocase complex. Interacts with the SecYEG preprotein conducting channel. Has a central role in coupling the hydrolysis of ATP to the transfer of proteins into and across the cell membrane, serving as an ATP-driven molecular motor driving the stepwise translocation of polypeptide chains across the membrane. Functionally, probably participates in protein translocation into and across both the cytoplasmic and thylakoid membranes in cyanobacterial cells. This is Protein translocase subunit SecA from Synechocystis sp. (strain ATCC 27184 / PCC 6803 / Kazusa).